The sequence spans 88 residues: UPF0335 protein Mnod_5968 (88 aa).

Belongs to the UPF0335 family.

The polypeptide is UPF0335 protein Mnod_5968 (Methylobacterium nodulans (strain LMG 21967 / CNCM I-2342 / ORS 2060)).